The primary structure comprises 304 residues: N-acetylmuramic acid 6-phosphate etherase (304 aa).

The SIS domain occupies 60–221; the sequence is GVSVLRHGGR…STAVMVRLGY (162 aa). The Proton donor role is filled by Glu-88. The active site involves Glu-119.

Belongs to the GCKR-like family. MurNAc-6-P etherase subfamily. In terms of assembly, homodimer.

The enzyme catalyses N-acetyl-D-muramate 6-phosphate + H2O = N-acetyl-D-glucosamine 6-phosphate + (R)-lactate. The protein operates within amino-sugar metabolism; N-acetylmuramate degradation. Specifically catalyzes the cleavage of the D-lactyl ether substituent of MurNAc 6-phosphate, producing GlcNAc 6-phosphate and D-lactate. This is N-acetylmuramic acid 6-phosphate etherase from Thermobifida fusca (strain YX).